The following is a 347-amino-acid chain: tRNA N6-adenosine threonylcarbamoyltransferase (347 aa).

The Fe cation site is built by His-109 and His-113. Residues 136–140 (TVSGG), Asp-169, Gly-182, Asp-186, and Asn-284 each bind substrate. Asp-312 contributes to the Fe cation binding site.

The protein belongs to the KAE1 / TsaD family. Fe(2+) serves as cofactor.

It is found in the cytoplasm. It catalyses the reaction L-threonylcarbamoyladenylate + adenosine(37) in tRNA = N(6)-L-threonylcarbamoyladenosine(37) in tRNA + AMP + H(+). In terms of biological role, required for the formation of a threonylcarbamoyl group on adenosine at position 37 (t(6)A37) in tRNAs that read codons beginning with adenine. Is involved in the transfer of the threonylcarbamoyl moiety of threonylcarbamoyl-AMP (TC-AMP) to the N6 group of A37, together with TsaE and TsaB. TsaD likely plays a direct catalytic role in this reaction. The polypeptide is tRNA N6-adenosine threonylcarbamoyltransferase (Chlorobium phaeobacteroides (strain BS1)).